The sequence spans 1134 residues: Envelopment polyprotein (1134 aa).

Residues 1–18 (MGIWKWLVMASLVWPVLT) form the signal peptide. The Lumenal portion of the chain corresponds to 19–487 (LRNVYDMKIE…GFHGWATAAL (469 aa)). Disulfide bonds link Cys-29/Cys-151, Cys-63/Cys-157, Cys-109/Cys-128, Cys-133/Cys-138, Cys-175/Cys-185, Cys-210/Cys-247, Cys-234/Cys-351, and Cys-380/Cys-389. Asn-134 carries an N-linked (GlcNAc...) asparagine; by host glycan. N-linked (GlcNAc...) asparagine; by host glycans are attached at residues Asn-235 and Asn-347. Residue Asn-399 is glycosylated (N-linked (GlcNAc...) asparagine; by host). 2 disulfides stabilise this stretch: Cys-405/Cys-424 and Cys-452/Cys-475. Residues 488 to 508 (LVTFCFGWVLIPAVTFIILAI) form a helical membrane-spanning segment. Over 509–627 (LKFIANIFHT…LNLFRYKSRC (119 aa)) the chain is Cytoplasmic. The tract at residues 516–533 (FHTSNQENRLKSVLRKIK) is binding to the ribonucleoprotein. CCHC-type zinc fingers lie at residues 545–565 (CDVC…GVSC) and 570–591 (CPYC…YKVC). 3 binding to the ribonucleoprotein regions span residues 588–605 (YKVC…KKTV), 592–603 (QVTHRFRDDLKK), and 611–625 (TPGC…RYKS). One can recognise an ITAM domain in the interval 611-634 (TPGCYRTLNLFRYKSRCYIFTMWI). Positions 615 to 618 (YRTL) match the YxxL motif. A helical transmembrane segment spans residues 628–648 (YIFTMWIFLLVLESILWAASA). Over 649 to 1104 (SETPLTPVWN…EWISGIFSGN (456 aa)) the chain is Lumenal. Cystine bridges form between Cys-734-Cys-769, Cys-738-Cys-776, Cys-750-Cys-884, Cys-764-Cys-895, Cys-779-Cys-903, Cys-805-Cys-814, and Cys-822-Cys-831. The interval 756 to 776 (YQYETSWGCNPSDCPGCGTGC) is fusion loop. Asn-927 is a glycosylation site (N-linked (GlcNAc...) asparagine; by host). Disulfide bonds link Cys-969–Cys-999, Cys-992–Cys-1044, Cys-1009–Cys-1014, Cys-1045–Cys-1050, and Cys-1084–Cys-1088. The helical transmembrane segment at 1105-1125 (WIVLIVLCVFLLFSLVLLSIL) threads the bilayer. The tract at residues 1121 to 1134 (LLSILCPVRKHKKS) is binding to the ribonucleoprotein. At 1126 to 1134 (CPVRKHKKS) the chain is on the cytoplasmic side.

It belongs to the hantavirus envelope glycoprotein family. Homodimer. Homotetramer; forms heterotetrameric Gn-Gc spikes in the pre-fusion conformation. Interacts (via C-terminus) with the nucleoprotein. Interacts with host TUFM; this interaction contributes to the virus-induced degradation of mitochondria by autophagy, which leads to degradation of host MAVS and inhibition of type I interferon (IFN) responses. Interacts with host MAP1LC3B; this interaction contributes to the virus-induced degradation of mitochondria by autophagy, which leads to degradation of host MAVS and inhibition of type I interferon (IFN) responses. As to quaternary structure, homodimer. Homotetramer; forms heterotetrameric Gn-Gc spikes in the pre-fusion conformation. Homotrimer; forms homotrimer in the post-fusion conformation at acidic pH. Interacts (via C-terminus) with the nucleoprotein. Post-translationally, envelope polyprotein precursor is quickly cleaved in vivo just after synthesis, presumably by host signal peptidase.

It is found in the virion membrane. Its subcellular location is the host cell surface. The protein localises to the host Golgi apparatus membrane. The protein resides in the host endoplasmic reticulum membrane. It localises to the host mitochondrion. Functionally, forms homotetramers with glycoprotein C at the surface of the virion. Attaches the virion to host cell receptors including integrin ITGAV/ITGB3. This attachment induces virion internalization predominantly through clathrin-dependent endocytosis. May also bind to host C1QBP for virus entry into the host cell. Mediates the assembly and budding of infectious virus particles through its interaction with the nucleocapsid protein and the viral genome. May dysregulate normal immune and endothelial cell responses through an ITAM motif. Translocates to mitochondria, binds to host TUFM and recruits MAP1LC3B. These interactions induce mitochondrial autophagy and therefore destruction of host MAVS leading to inhibition of type I interferon (IFN) responses. Concomitant breakdown of glycoprotein N is apparently prevented by the nucleoprotein that may inhibit Gn-stimulated autophagosome-lysosome fusion. Interacts with the viral genomic RNA. In terms of biological role, forms homotetramers with glycoprotein N at the surface of the virion. Attaches the virion to host cell receptors including integrin ITGAV/ITGB3. This attachment induces virion internalization predominantly through clathrin-dependent endocytosis. May also bind to host C1QBP for virus entry into the host cell. Class II fusion protein that promotes fusion of viral membrane with host endosomal membrane after endocytosis of the virion. This is Envelopment polyprotein (GP) from Apodemus agrarius (Eurasian field mouse).